The sequence spans 333 residues: Glycerol-3-phosphate dehydrogenase [NAD(P)+] (333 aa).

NADPH-binding residues include Trp-13, Lys-33, and Lys-108. Residues Lys-108 and Gly-138 each coordinate sn-glycerol 3-phosphate. Residue Ser-142 participates in NADPH binding. Sn-glycerol 3-phosphate contacts are provided by Lys-193, Asp-246, Ser-256, Arg-257, and Asn-258. Lys-193 serves as the catalytic Proton acceptor. Arg-257 is an NADPH binding site. Val-281 and Glu-283 together coordinate NADPH.

The protein belongs to the NAD-dependent glycerol-3-phosphate dehydrogenase family.

The protein localises to the cytoplasm. The enzyme catalyses sn-glycerol 3-phosphate + NAD(+) = dihydroxyacetone phosphate + NADH + H(+). It catalyses the reaction sn-glycerol 3-phosphate + NADP(+) = dihydroxyacetone phosphate + NADPH + H(+). It participates in membrane lipid metabolism; glycerophospholipid metabolism. Its function is as follows. Catalyzes the reduction of the glycolytic intermediate dihydroxyacetone phosphate (DHAP) to sn-glycerol 3-phosphate (G3P), the key precursor for phospholipid synthesis. This is Glycerol-3-phosphate dehydrogenase [NAD(P)+] from Bifidobacterium longum subsp. infantis (strain ATCC 15697 / DSM 20088 / JCM 1222 / NCTC 11817 / S12).